The sequence spans 202 residues: Outer-membrane lipoprotein carrier protein (202 aa).

The signal sequence occupies residues 1–18; sequence MNRLFLILLLIFSHEVFS.

This sequence belongs to the LolA family. Monomer.

It localises to the periplasm. Participates in the translocation of lipoproteins from the inner membrane to the outer membrane. Only forms a complex with a lipoprotein if the residue after the N-terminal Cys is not an aspartate (The Asp acts as a targeting signal to indicate that the lipoprotein should stay in the inner membrane). In Legionella pneumophila (strain Lens), this protein is Outer-membrane lipoprotein carrier protein.